A 108-amino-acid polypeptide reads, in one-letter code: uncharacterized protein (108 aa).

The N-terminal stretch at 1 to 22 is a signal peptide; it reads MMIKQCVICLSLLVFGTTAAHA.

This is an uncharacterized protein from Bacillus subtilis (strain 168).